Reading from the N-terminus, the 450-residue chain is Tubulin beta-2 chain (450 aa).

GTP contacts are provided by glutamine 11, glutamate 69, serine 138, glycine 142, threonine 143, glycine 144, asparagine 204, and asparagine 226. Position 69 (glutamate 69) interacts with Mg(2+). The disordered stretch occupies residues alanine 428–glutamine 450. The span at threonine 429 to glutamine 450 shows a compositional bias: acidic residues.

This sequence belongs to the tubulin family. In terms of assembly, dimer of alpha and beta chains. A typical microtubule is a hollow water-filled tube with an outer diameter of 25 nm and an inner diameter of 15 nm. Alpha-beta heterodimers associate head-to-tail to form protofilaments running lengthwise along the microtubule wall with the beta-tubulin subunit facing the microtubule plus end conferring a structural polarity. Microtubules usually have 13 protofilaments but different protofilament numbers can be found in some organisms and specialized cells. Requires Mg(2+) as cofactor. Cleaved by caspase ced-3 in vitro.

It is found in the cytoplasm. The protein localises to the cytoskeleton. Functionally, tubulin is the major constituent of microtubules, a cylinder consisting of laterally associated linear protofilaments composed of alpha- and beta-tubulin heterodimers. Microtubules grow by the addition of GTP-tubulin dimers to the microtubule end, where a stabilizing cap forms. Below the cap, tubulin dimers are in GDP-bound state, owing to GTPase activity of alpha-tubulin. Required for the normal dynamic behavior of the non-centrosomal microtubules in the epidermal syncytium. Involved in the redistribution of microtubule end-binding protein EB1/ebp-2 caused by wounding. Required to modulate expression in the epidermis of antimicrobial peptides, such as nlp-29, after wounding, or fungal infection. This is Tubulin beta-2 chain (tbb-2) from Caenorhabditis elegans.